We begin with the raw amino-acid sequence, 114 residues long: T cell receptor beta variable 5-1 (114 aa).

The signal sequence occupies residues 1-21; sequence MGSRLLCWVLLCLLGAGPVKA. An Ig-like domain is found at 22-114; it reads GVTQTPRYLI…SALYLCASSL (93 aa). A disulfide bridge links C42 with C110. N96 carries an N-linked (GlcNAc...) asparagine glycan.

As to quaternary structure, alpha-beta TR is a heterodimer composed of an alpha and beta chain; disulfide-linked. The alpha-beta TR is associated with the transmembrane signaling CD3 coreceptor proteins to form the TR-CD3 (TcR or TCR). The assembly of alpha-beta TR heterodimers with CD3 occurs in the endoplasmic reticulum where a single alpha-beta TR heterodimer associates with one CD3D-CD3E heterodimer, one CD3G-CD3E heterodimer and one CD247 homodimer forming a stable octameric structure. CD3D-CD3E and CD3G-CD3E heterodimers preferentially associate with TR alpha and TR beta chains, respectively. The association of the CD247 homodimer is the last step of TcR assembly in the endoplasmic reticulum and is required for transport to the cell surface.

The protein localises to the cell membrane. V region of the variable domain of T cell receptor (TR) beta chain that participates in the antigen recognition. Alpha-beta T cell receptors are antigen specific receptors which are essential to the immune response and are present on the cell surface of T lymphocytes. Recognize peptide-major histocompatibility (MH) (pMH) complexes that are displayed by antigen presenting cells (APC), a prerequisite for efficient T cell adaptive immunity against pathogens. Binding of alpha-beta TR to pMH complex initiates TR-CD3 clustering on the cell surface and intracellular activation of LCK that phosphorylates the ITAM motifs of CD3G, CD3D, CD3E and CD247 enabling the recruitment of ZAP70. In turn ZAP70 phosphorylates LAT, which recruits numerous signaling molecules to form the LAT signalosome. The LAT signalosome propagates signal branching to three major signaling pathways, the calcium, the mitogen-activated protein kinase (MAPK) kinase and the nuclear factor NF-kappa-B (NF-kB) pathways, leading to the mobilization of transcription factors that are critical for gene expression and essential for T cell growth and differentiation. The T cell repertoire is generated in the thymus, by V-(D)-J rearrangement. This repertoire is then shaped by intrathymic selection events to generate a peripheral T cell pool of self-MH restricted, non-autoaggressive T cells. Post-thymic interaction of alpha-beta TR with the pMH complexes shapes TR structural and functional avidity. This Homo sapiens (Human) protein is T cell receptor beta variable 5-1.